Here is a 272-residue protein sequence, read N- to C-terminus: MICOS complex subunit MIC27 (272 aa).

The N-terminal 24 residues, 1–24, are a transit peptide targeting the mitochondrion; sequence MAAKVARLAAAASSLPFVCAVYAE. At 28–107 the chain is on the mitochondrial intermembrane side; the sequence is SKSQLVKPKQ…YVYLKNPPPD (80 aa). Residues 108 to 126 form a helical membrane-spanning segment; it reads FLPRVGIITISGLAGVVLA. Residues 127–134 are Mitochondrial matrix-facing; sequence RKDSRFKK. Residues 135–152 traverse the membrane as a helical segment; that stretch reads IAYPLGLTTLGISVCYPA. Over 153 to 272 the chain is Mitochondrial intermembrane; sequence QAVVIAKITG…EDVDMYSTRS (120 aa). The tract at residues 187–272 is disordered; sequence SKLQQESKSV…EDVDMYSTRS (86 aa). Composition is skewed to polar residues over residues 188 to 198 and 206 to 245; these read KLQQESKSVTQ and ISNV…TVKT.

This sequence belongs to the apolipoprotein O/MICOS complex subunit Mic27 family. Component of the mitochondrial contact site and cristae organizing system (MICOS) complex (also known as MINOS or MitOS complex).

The protein localises to the mitochondrion inner membrane. Functionally, component of the MICOS complex, a large protein complex of the mitochondrial inner membrane that plays crucial roles in the maintenance of crista junctions, inner membrane architecture, and formation of contact sites to the outer membrane. This Gallus gallus (Chicken) protein is MICOS complex subunit MIC27 (APOOL).